Reading from the N-terminus, the 66-residue chain is Large ribosomal subunit protein bL33c (66 aa).

The protein belongs to the bacterial ribosomal protein bL33 family.

It is found in the plastid. The protein resides in the chloroplast. This Acorus calamus (Sweet flag) protein is Large ribosomal subunit protein bL33c.